The sequence spans 783 residues: Endonuclease MutS2 (783 aa).

328–335 (GPNTGGKT) is a binding site for ATP. The Smr domain maps to 708–783 (LDLRGKRYEE…GSGCTIATLG (76 aa)).

This sequence belongs to the DNA mismatch repair MutS family. MutS2 subfamily. Homodimer. Binds to stalled ribosomes, contacting rRNA.

Endonuclease that is involved in the suppression of homologous recombination and thus may have a key role in the control of bacterial genetic diversity. Its function is as follows. Acts as a ribosome collision sensor, splitting the ribosome into its 2 subunits. Detects stalled/collided 70S ribosomes which it binds and splits by an ATP-hydrolysis driven conformational change. Acts upstream of the ribosome quality control system (RQC), a ribosome-associated complex that mediates the extraction of incompletely synthesized nascent chains from stalled ribosomes and their subsequent degradation. Probably generates substrates for RQC. This Streptococcus thermophilus (strain CNRZ 1066) protein is Endonuclease MutS2.